The chain runs to 307 residues: UDP-3-O-acyl-N-acetylglucosamine deacetylase (307 aa).

Positions 78, 241, and 245 each coordinate Zn(2+). His268 functions as the Proton donor in the catalytic mechanism.

Belongs to the LpxC family. Requires Zn(2+) as cofactor.

The enzyme catalyses a UDP-3-O-[(3R)-3-hydroxyacyl]-N-acetyl-alpha-D-glucosamine + H2O = a UDP-3-O-[(3R)-3-hydroxyacyl]-alpha-D-glucosamine + acetate. Its pathway is glycolipid biosynthesis; lipid IV(A) biosynthesis; lipid IV(A) from (3R)-3-hydroxytetradecanoyl-[acyl-carrier-protein] and UDP-N-acetyl-alpha-D-glucosamine: step 2/6. Functionally, catalyzes the hydrolysis of UDP-3-O-myristoyl-N-acetylglucosamine to form UDP-3-O-myristoylglucosamine and acetate, the committed step in lipid A biosynthesis. The chain is UDP-3-O-acyl-N-acetylglucosamine deacetylase from Bordetella bronchiseptica (strain ATCC BAA-588 / NCTC 13252 / RB50) (Alcaligenes bronchisepticus).